A 450-amino-acid chain; its full sequence is MATKSVLMLGSGFVTRPTLDVLTDSGIKVTVACRTLESAKKLSAGVQHSTPISLDVNDDAALDAEVAKHDLVISLIPYTFHATVIKSAIRQKKHVVTTSYVSPAMMELDQAAKDAGITVMNEIGLDPGIDHLYAIKTIEEVHAAGGKIKTFLSYCGGLPAPESSDNPLGYKFSWSSRGVLLALRNAASFYKDGKVTNVAGPELMATAKPYFIYPGFAFVAYPNRDSTPYKERYQIPEADNIVRGTLRYQGFPQFIKVLVDIGFLSDEEQPFLKEAIPWKEATQKIVKASSASEQDIVSTIVSNATFESTEEQKRIVAGLKWLGIFSDKKITPRGNALDTLCATLEEKMQFEEGERDLVMLQHKFEIENKDGSRETRTSSLCEYGAPIGSGGYSAMAKLVGVPCAVAVKFVLDGTISDRGVLAPMNSKINDPLMKELKEKYGIECKEKVVA.

Residues 11–14, 33–35, 55–56, isoleucine 76, 98–99, 125–127, and serine 175 contribute to the NADP(+) site; these read SGFV, CRT, DV, TS, and LDP. Residues 99-100 and aspartate 126 contribute to the L-saccharopine site; that span reads SY. L-saccharopine contacts are provided by residues arginine 224 and 245-247; that span reads TLR.

It belongs to the saccharopine dehydrogenase family. Homodimer.

It carries out the reaction L-saccharopine + NADP(+) + H2O = (S)-2-amino-6-oxohexanoate + L-glutamate + NADPH + H(+). It functions in the pathway amino-acid biosynthesis; L-lysine biosynthesis via AAA pathway; L-lysine from L-alpha-aminoadipate (fungal route): step 2/3. The chain is Saccharopine dehydrogenase [NADP(+), L-glutamate-forming] (LYS3) from Pyricularia oryzae (strain 70-15 / ATCC MYA-4617 / FGSC 8958) (Rice blast fungus).